Consider the following 432-residue polypeptide: MAAAAGRSAWLAAWGGRLRRGLAAGRRAVPTRGPLAAAVAGVALAGAGAAWHHGRVKAAAREGSRTVSAQKNYLGPIEKLSLRKQRFMQFSSLEHDGEYYMTPRDFLFSVMFEQVERKTLVKKLAKKDIEDVLSGIQTARCGSTFFRDLGDKGVISYTEYLFLLTILTKPHSGFHVAFKMLDVDGNEMIERKEFVRLQKIISKQDGFKTVKTNETEYQDPTVKEPGVNTTLQVRFFGKRGEKKLHYKEFRRFVENLQTEVQEMEFLQFSKGLNFMRKEDFAEWLLFFTNTENKDIYWRNVREKLSVGESISLDEFKSFCHFTTHLEDFAIAMQTFSLAHRPVRLAEFKRAVKVATGQELSDNLLDTVFKIFDLDGDECLSHGEFLGVLKNRMHRGLWVSQQQSVQEYWKCVKKESIKGVKEAWRQQAGKGPF.

Residues 1–22 (MAAAAGRSAWLAAWGGRLRRGL) constitute a mitochondrion transit peptide. The EF-hand 1 domain maps to 169–204 (KPHSGFHVAFKMLDVDGNEMIERKEFVRLQKIISKQ). Asp-182, Asp-184, Asn-186, Met-188, Glu-190, and Glu-193 together coordinate Ca(2+). Ser-202 carries the post-translational modification Phosphoserine. An EF-hand 2; degenerate domain is found at 224–259 (EPGVNTTLQVRFFGKRGEKKLHYKEFRRFVENLQTE). The 36-residue stretch at 290–325 (TENKDIYWRNVREKLSVGESISLDEFKSFCHFTTHL) folds into the EF-hand 3; degenerate domain. Residues 359–394 (LSDNLLDTVFKIFDLDGDECLSHGEFLGVLKNRMHR) form the EF-hand 4 domain. Residues Asp-372, Asp-374, Asp-376, Cys-378, and Glu-383 each contribute to the Ca(2+) site.

Belongs to the MICU1 family. MICU2 subfamily. In terms of assembly, heterodimer; disulfide-linked; heterodimerizes with MICU1. Component of the uniplex complex, composed of MCU, EMRE/SMDT1, MICU1 and MICU2 in a 4:4:1:1 stoichiometry.

Its subcellular location is the mitochondrion intermembrane space. The protein resides in the mitochondrion inner membrane. In terms of biological role, calcium sensor of the mitochondrial calcium uniporter (MCU) channel, which senses calcium level via its EF-hand domains. MICU1 and MICU2 form a disulfide-linked heterodimer that stimulates and inhibits MCU activity, depending on the concentration of calcium. At low calcium levels, MICU1 occludes the pore of the MCU channel, preventing mitochondrial calcium uptake. At higher calcium levels, calcium-binding to MICU1 and MICU2 induces a conformational change that weakens MCU-MICU1 interactions and moves the MICU1-MICU2 heterodimer away from the pore, allowing calcium permeation through the MCU channel. The sequence is that of Calcium uptake protein 2, mitochondrial (Micu2) from Rattus norvegicus (Rat).